The primary structure comprises 1073 residues: Guanylyl cyclase C (1073 aa).

The signal sequence occupies residues 1–23 (MKTLLLDLALWSLLFQPGWLSFS). Over 24–430 (SQVSQNCHNG…PNDITGRGPQ (407 aa)) the chain is Extracellular. 8 N-linked (GlcNAc...) asparagine glycosylation sites follow: Asn-32, Asn-75, Asn-79, Asn-195, Asn-284, Asn-307, Asn-345, and Asn-402. Residues 431–454 (ILMIAVFTLTGAVVLLLLVALLML) traverse the membrane as a helical segment. Topologically, residues 455–1073 (RKYRKDYELR…NTTDKESTYF (619 aa)) are cytoplasmic. The Protein kinase domain occupies 489 to 749 (LKIDDDKRRD…KIETTLAKIF (261 aa)). A Guanylate cyclase domain is found at 824–954 (TIYFSDIVGF…DTVNTASRME (131 aa)).

This sequence belongs to the adenylyl cyclase class-4/guanylyl cyclase family. Homotrimer. Interacts via its C-terminal region with NHERF4. Interacts with the lectin chaperone VIP36. Glycosylation at Asn-75 and/or Asn-79 is required for interaction with VIP36 while glycosylation at Asn-345 and Asn-402 modulates ligand-mediated GUCY2C activation.

The protein localises to the cell membrane. It is found in the endoplasmic reticulum membrane. It carries out the reaction GTP = 3',5'-cyclic GMP + diphosphate. Functionally, guanylyl cyclase that catalyzes synthesis of cyclic GMP (cGMP) from GTP. Receptor for the E.coli heat-stable enterotoxin; E.coli enterotoxin markedly stimulates the accumulation of cGMP in mammalian cells expressing GUCY2C. Also activated by the endogenous peptides guanylin and uroguanylin. The protein is Guanylyl cyclase C of Homo sapiens (Human).